A 415-amino-acid chain; its full sequence is MNFIEDLKWRGALNQVTDEAGLIEAMASGEIGAYVGTDPTADSLHLGHLIPFMVLKRFQNAGGKAVIIIGGATGAIGDPRPTTERQLLSPEQLRQNEKGITEQVTKLFGDEKTAIVNNNDWLGKLTLTDFLRDYGKLFSINVMLKKDVVASRLETGISFTEFTYQILQGIDYHELWRRHNVQLQIGGSDQWGNITSGIDLIHSIEGNNATAFGLTIPLMTDSSGKKFGKSEGNAIWLNPEKTSPYTFYQFWYNQSDEDVVKYLKYFTFLGVDEINNLEQEAKNNPGGRIAQKRLAQEVTKFVHGEQAVADAEKLSAALFSGDVANLSAADIADAFGGVPSFDITSEKKNVVDFLVDGEVEKSKRQAREDVTNGAITISGEKVTDVNFEIDPTKHYDGEFVLVRRGKKKYFLGKVK.

Tyr-34 is an L-tyrosine binding site. The 'HIGH' region motif lies at 39–48 (PTADSLHLGH). The L-tyrosine site is built by Tyr-164 and Gln-168. Residues 226 to 230 (KFGKS) carry the 'KMSKS' region motif. Lys-229 serves as a coordination point for ATP. The 68-residue stretch at 348 to 415 (KNVVDFLVDG…KKKYFLGKVK (68 aa)) folds into the S4 RNA-binding domain.

Belongs to the class-I aminoacyl-tRNA synthetase family. TyrS type 1 subfamily. Homodimer.

It is found in the cytoplasm. The catalysed reaction is tRNA(Tyr) + L-tyrosine + ATP = L-tyrosyl-tRNA(Tyr) + AMP + diphosphate + H(+). Its function is as follows. Catalyzes the attachment of tyrosine to tRNA(Tyr) in a two-step reaction: tyrosine is first activated by ATP to form Tyr-AMP and then transferred to the acceptor end of tRNA(Tyr). This chain is Tyrosine--tRNA ligase, found in Leuconostoc mesenteroides subsp. mesenteroides (strain ATCC 8293 / DSM 20343 / BCRC 11652 / CCM 1803 / JCM 6124 / NCDO 523 / NBRC 100496 / NCIMB 8023 / NCTC 12954 / NRRL B-1118 / 37Y).